Here is a 155-residue protein sequence, read N- to C-terminus: Probable Brix domain-containing ribosomal biogenesis protein (155 aa).

A Brix domain is found at Met-1–Glu-155.

In terms of biological role, probably involved in the biogenesis of the ribosome. This chain is Probable Brix domain-containing ribosomal biogenesis protein, found in Methanothermobacter thermautotrophicus (strain ATCC 29096 / DSM 1053 / JCM 10044 / NBRC 100330 / Delta H) (Methanobacterium thermoautotrophicum).